A 361-amino-acid polypeptide reads, in one-letter code: Epoxyqueuosine reductase (361 aa).

Residue D147 is the Proton donor of the active site. The 30-residue stretch at 193-222 folds into the 4Fe-4S ferredoxin-type domain; it reads VDPAMDSEHCGRCSACLDICPTAAFVGPYR. The [4Fe-4S] cluster site is built by C202, C205, C208, C212, C228, C255, C258, and C262.

The protein belongs to the QueG family. As to quaternary structure, monomer. Requires cob(II)alamin as cofactor. [4Fe-4S] cluster serves as cofactor.

It is found in the cytoplasm. It catalyses the reaction epoxyqueuosine(34) in tRNA + AH2 = queuosine(34) in tRNA + A + H2O. It participates in tRNA modification; tRNA-queuosine biosynthesis. In terms of biological role, catalyzes the conversion of epoxyqueuosine (oQ) to queuosine (Q), which is a hypermodified base found in the wobble positions of tRNA(Asp), tRNA(Asn), tRNA(His) and tRNA(Tyr). In Pseudomonas aeruginosa (strain ATCC 15692 / DSM 22644 / CIP 104116 / JCM 14847 / LMG 12228 / 1C / PRS 101 / PAO1), this protein is Epoxyqueuosine reductase.